Reading from the N-terminus, the 509-residue chain is ATP synthase subunit alpha, mitochondrial (509 aa).

An ATP-binding site is contributed by 171–178 (GDRQTGKT).

Belongs to the ATPase alpha/beta chains family. F-type ATPases have 2 components, CF(1) - the catalytic core - and CF(0) - the membrane proton channel. CF(1) has five subunits: alpha(3), beta(3), gamma(1), delta(1), epsilon(1). CF(0) has three main subunits: a, b and c.

It is found in the mitochondrion. The protein resides in the mitochondrion inner membrane. In terms of biological role, mitochondrial membrane ATP synthase (F(1)F(0) ATP synthase or Complex V) produces ATP from ADP in the presence of a proton gradient across the membrane which is generated by electron transport complexes of the respiratory chain. F-type ATPases consist of two structural domains, F(1) - containing the extramembraneous catalytic core, and F(0) - containing the membrane proton channel, linked together by a central stalk and a peripheral stalk. During catalysis, ATP synthesis in the catalytic domain of F(1) is coupled via a rotary mechanism of the central stalk subunits to proton translocation. Subunits alpha and beta form the catalytic core in F(1). Rotation of the central stalk against the surrounding alpha(3)beta(3) subunits leads to hydrolysis of ATP in three separate catalytic sites on the beta subunits. Subunit alpha does not bear the catalytic high-affinity ATP-binding sites. The chain is ATP synthase subunit alpha, mitochondrial (ATPA) from Triticum aestivum (Wheat).